The primary structure comprises 289 residues: Zinc finger matrin-type protein 3 (289 aa).

The disordered stretch occupies residues 1 to 59 (MILLQHAGLPPPKRPSSSPPMSVAARSTGALQLPPQKPFGQEASLPLAGEEEPPKGGEQ). A compositionally biased stretch (pro residues) spans 9–18 (LPPPKRPSSS). Matrin-type zinc fingers lie at residues 70–100 (LYCK…KLRN) and 147–177 (DYCK…RLRL). Residues 180–191 (AQSNSFSDSSEV) show a composition bias toward polar residues. The segment at 180–200 (AQSNSFSDSSEVGQRRTRKEG) is disordered. Residues 246–276 (FYCSMCNVGAGEEVEFRQHLESKQHKSKVSE) form a Matrin-type 3 zinc finger.

Interacts with dsRNA.

The protein localises to the nucleus. It localises to the nucleolus. Acts as a bona fide target gene of p53/TP53. May play a role in the TP53-dependent growth regulatory pathway. May contribute to TP53-mediated apoptosis by regulation of TP53 expression and translocation to the nucleus and nucleolus. This Bos taurus (Bovine) protein is Zinc finger matrin-type protein 3.